The following is a 282-amino-acid chain: Bifunctional protein FolD (282 aa).

Residues 160 to 162 (NRS), Ser185, and Ile228 contribute to the NADP(+) site.

It belongs to the tetrahydrofolate dehydrogenase/cyclohydrolase family. Homodimer.

It catalyses the reaction (6R)-5,10-methylene-5,6,7,8-tetrahydrofolate + NADP(+) = (6R)-5,10-methenyltetrahydrofolate + NADPH. The catalysed reaction is (6R)-5,10-methenyltetrahydrofolate + H2O = (6R)-10-formyltetrahydrofolate + H(+). It functions in the pathway one-carbon metabolism; tetrahydrofolate interconversion. Functionally, catalyzes the oxidation of 5,10-methylenetetrahydrofolate to 5,10-methenyltetrahydrofolate and then the hydrolysis of 5,10-methenyltetrahydrofolate to 10-formyltetrahydrofolate. In Cenarchaeum symbiosum (strain A), this protein is Bifunctional protein FolD.